The primary structure comprises 628 residues: Beta-galactosidase large subunit (628 aa).

The Proton donor role is filled by Glu468. Residue Glu536 is the Nucleophile of the active site.

It belongs to the glycosyl hydrolase 2 family. In terms of assembly, heterodimer of a large (LacL) and a small subunit (LacM).

The catalysed reaction is Hydrolysis of terminal non-reducing beta-D-galactose residues in beta-D-galactosides.. Its function is as follows. Component of a beta-galactosidase. The polypeptide is Beta-galactosidase large subunit (lacL) (Lactobacillus acidophilus (strain ATCC 700396 / NCK56 / N2 / NCFM)).